We begin with the raw amino-acid sequence, 992 residues long: Protein translocase subunit SecA (992 aa).

ATP-binding positions include glutamine 86, 104-108 (GEGKT), and aspartate 535. The interval 885-910 (IAGGSSEVEQTRKPQRRTVQQIGRND) is disordered. Zn(2+) contacts are provided by cysteine 912, cysteine 914, cysteine 923, and histidine 924. The disordered stretch occupies residues 965-992 (IDNGTLPAASPKTPRGRQPQAVPRGKKR).

Belongs to the SecA family. Monomer and homodimer. Part of the essential Sec protein translocation apparatus which comprises SecA, SecYEG and auxiliary proteins SecDF. Other proteins may also be involved. It depends on Zn(2+) as a cofactor.

The protein localises to the cell membrane. It is found in the cytoplasm. The catalysed reaction is ATP + H2O + cellular proteinSide 1 = ADP + phosphate + cellular proteinSide 2.. In terms of biological role, part of the Sec protein translocase complex. Interacts with the SecYEG preprotein conducting channel. Has a central role in coupling the hydrolysis of ATP to the transfer of proteins into and across the cell membrane, serving as an ATP-driven molecular motor driving the stepwise translocation of polypeptide chains across the membrane. The protein is Protein translocase subunit SecA of Chloroflexus aggregans (strain MD-66 / DSM 9485).